The following is a 597-amino-acid chain: Elongation factor 4 (597 aa).

One can recognise a tr-type G domain in the interval 2 to 184; the sequence is KNIRNFSIIA…EVVNKIPPPK (183 aa). GTP is bound by residues 14 to 19 and 131 to 134; these read DHGKST and NKID.

It belongs to the TRAFAC class translation factor GTPase superfamily. Classic translation factor GTPase family. LepA subfamily.

Its subcellular location is the cell inner membrane. The enzyme catalyses GTP + H2O = GDP + phosphate + H(+). Required for accurate and efficient protein synthesis under certain stress conditions. May act as a fidelity factor of the translation reaction, by catalyzing a one-codon backward translocation of tRNAs on improperly translocated ribosomes. Back-translocation proceeds from a post-translocation (POST) complex to a pre-translocation (PRE) complex, thus giving elongation factor G a second chance to translocate the tRNAs correctly. Binds to ribosomes in a GTP-dependent manner. In Chromobacterium violaceum (strain ATCC 12472 / DSM 30191 / JCM 1249 / CCUG 213 / NBRC 12614 / NCIMB 9131 / NCTC 9757 / MK), this protein is Elongation factor 4.